We begin with the raw amino-acid sequence, 759 residues long: Protein YdeP (759 aa).

2 residues coordinate [4Fe-4S] cluster: C49 and C52.

The protein belongs to the prokaryotic molybdopterin-containing oxidoreductase family. [4Fe-4S] cluster serves as cofactor. The cofactor is Mo-bis(molybdopterin guanine dinucleotide).

Functionally, probably involved in acid resistance. This chain is Protein YdeP (ydeP), found in Shigella flexneri.